A 185-amino-acid polypeptide reads, in one-letter code: Cytidylate kinase (185 aa).

8–16 serves as a coordination point for ATP; sequence GPPGSGKTT.

The protein belongs to the cytidylate kinase family. Type 2 subfamily.

The protein resides in the cytoplasm. The enzyme catalyses CMP + ATP = CDP + ADP. The catalysed reaction is dCMP + ATP = dCDP + ADP. The chain is Cytidylate kinase from Desulfurococcus amylolyticus (strain DSM 18924 / JCM 16383 / VKM B-2413 / 1221n) (Desulfurococcus kamchatkensis).